The sequence spans 619 residues: Probable ATP-dependent RNA helicase DDX59 (619 aa).

Residue Lys-26 forms a Glycyl lysine isopeptide (Lys-Gly) (interchain with G-Cter in SUMO2) linkage. Residues 57–98 (SESCPFPSPGGQLAEVHSVSPEQGAKDSHPSEEPVKSFSKTQ) are disordered. A phosphoserine mark is found at Ser-64 and Ser-76. The span at 80–91 (GAKDSHPSEEPV) shows a compositional bias: basic and acidic residues. The segment at 104-133 (GEPICVVCGRYGEYICDKTDEDVCSLECKA) adopts an HIT-type zinc-finger fold. The interval 142 to 161 (KEEKSKLSNPQKADSEPESP) is disordered. Phosphoserine is present on residues Ser-156 and Ser-160. A Q motif motif is present at residues 203–231 (IDFEHCSLPEVLNHNLKKSGYEVPTPIQM). The region spanning 234 to 405 (IPVGLLGRDI…SQLLHNPVRI (172 aa)) is the Helicase ATP-binding domain. Residue 247–254 (ADTGSGKT) participates in ATP binding. The short motif at 353–356 (DEAD) is the DEAD box element. Residues 416-579 (NVRQIILWVE…ILPPQLLNSP (164 aa)) form the Helicase C-terminal domain.

The protein belongs to the DEAD box helicase family. DDX59 subfamily. As to quaternary structure, interacts (via HIT-type zinc finger) with the RUVBL1/RUVBL2 complex in the presence of ADP. Expressed in fibroblasts (at protein level).

It localises to the cytoplasm. Its subcellular location is the nucleus. It carries out the reaction ATP + H2O = ADP + phosphate + H(+). The polypeptide is Probable ATP-dependent RNA helicase DDX59 (DDX59) (Homo sapiens (Human)).